The sequence spans 146 residues: Large ribosomal subunit protein uL15 (146 aa).

The segment at 1 to 54 (MKLHELRPAAGSKSAPKRVGRGTGSGLGRNAGKGEKGQNARSGGGVRPGFEGGQ) is disordered. Gly residues-rich tracts occupy residues 21-31 (RGTGSGLGRNA) and 42-52 (SGGGVRPGFEG).

The protein belongs to the universal ribosomal protein uL15 family. As to quaternary structure, part of the 50S ribosomal subunit.

Functionally, binds to the 23S rRNA. In Clostridium perfringens (strain ATCC 13124 / DSM 756 / JCM 1290 / NCIMB 6125 / NCTC 8237 / Type A), this protein is Large ribosomal subunit protein uL15.